The primary structure comprises 434 residues: Putative D-alanyl-D-alanine carboxypeptidase (434 aa).

Residues 7–25 (YLSLLAVSCSVSAAKYPVL) traverse the membrane as a helical; Signal-anchor segment.

It belongs to the peptidase S12 family. YfeW subfamily.

It is found in the cell inner membrane. The enzyme catalyses Preferential cleavage: (Ac)2-L-Lys-D-Ala-|-D-Ala. Also transpeptidation of peptidyl-alanyl moieties that are N-acyl substituents of D-alanine.. Functionally, penicillin-binding protein. Has low DD-carboxypeptidase activity. This chain is Putative D-alanyl-D-alanine carboxypeptidase, found in Escherichia coli (strain K12).